A 693-amino-acid polypeptide reads, in one-letter code: DNA ligase (693 aa).

NAD(+) contacts are provided by residues 43–47, 92–93, and Glu123; these read DEEYD and SL. The N6-AMP-lysine intermediate role is filled by Lys125. NAD(+) is bound by residues Arg146, Glu180, Lys296, and Lys320. Residues Cys414, Cys417, Cys433, and Cys438 each coordinate Zn(2+). The BRCT domain occupies 595 to 684; that stretch reads VKYDVLKGLT…AKLKGYNFDE (90 aa).

The protein belongs to the NAD-dependent DNA ligase family. LigA subfamily. Requires Mg(2+) as cofactor. Mn(2+) serves as cofactor.

The catalysed reaction is NAD(+) + (deoxyribonucleotide)n-3'-hydroxyl + 5'-phospho-(deoxyribonucleotide)m = (deoxyribonucleotide)n+m + AMP + beta-nicotinamide D-nucleotide.. DNA ligase that catalyzes the formation of phosphodiester linkages between 5'-phosphoryl and 3'-hydroxyl groups in double-stranded DNA using NAD as a coenzyme and as the energy source for the reaction. It is essential for DNA replication and repair of damaged DNA. The chain is DNA ligase from Thermotoga neapolitana (strain ATCC 49049 / DSM 4359 / NBRC 107923 / NS-E).